Reading from the N-terminus, the 1708-residue chain is Rapamycin-insensitive companion of mTOR (1708 aa).

Positions Met-1–Gln-789 are interaction with NBN. Residues Ser-21, Ser-35, and Ser-265 each carry the phosphoserine modification. A Glycyl lysine isopeptide (Lys-Gly) (interchain with G-Cter in ubiquitin) cross-link involves residue Lys-274. The tract at residues Leu-521 to Leu-570 is ribosome-binding domain. 3 residues coordinate ATP: Asn-543, Arg-572, and Arg-576. The tract at residues Leu-1022–Pro-1041 is disordered. An N6-acetyllysine mark is found at Lys-1092 and Lys-1095. Phosphothreonine is present on Thr-1103. The segment at Thr-1103–Leu-1134 is disordered. An N6-acetyllysine mark is found at Lys-1116, Lys-1119, and Lys-1125. Residue Thr-1135 is modified to Phosphothreonine; by RPS6KB1. Phosphoserine is present on residues Ser-1138, Ser-1162, and Ser-1219. The interval Val-1204–Cys-1252 is disordered. Residues Glu-1206–Asn-1221 show a composition bias toward polar residues. The span at Thr-1222–Thr-1240 shows a compositional bias: low complexity. Position 1235 is a phosphoserine; by GSK3-beta (Ser-1235). A Phosphothreonine modification is found at Thr-1271. Phosphoserine occurs at positions 1274, 1278, 1282, and 1284. Positions Asn-1275–Val-1288 are enriched in low complexity. The segment at Asn-1275–Arg-1298 is disordered. Thr-1295 carries the phosphothreonine modification. 2 positions are modified to phosphoserine: Ser-1302 and Ser-1313. Thr-1332 is modified (phosphothreonine). Residues Ser-1346 and Ser-1353 each carry the phosphoserine modification. Thr-1376 bears the Phosphothreonine mark. Ser-1385 is subject to Phosphoserine. Tyr-1386 is subject to Phosphotyrosine. Ser-1388, Ser-1396, and Ser-1411 each carry phosphoserine. His-1515, Cys-1520, and Cys-1523 together coordinate Zn(2+). Residues Ser-1571, Ser-1574, Ser-1577, and Ser-1591 each carry the phosphoserine modification. Zn(2+) is bound at residue Cys-1651. Phosphothreonine; by GSK3-alpha and GSK3-beta is present on Thr-1695.

Belongs to the RICTOR family. In terms of assembly, component of the mechanistic target of rapamycin complex 2 (mTORC2), consisting in two heterotretramers composed of MTOR, MLST8, RICTOR and MAPKAP1/SIN1. The mTORC2 core complex associates with PRR5/PROTOR1 and/or PRR5L/PROTOR2. Contrary to mTORC1, mTORC2 does not bind to and is not sensitive to FKBP12-rapamycin. Binds directly to MTOR and PRR5 within the TORC2 complex; interaction with MTOR is enhanced by deubiquitination of RICTOR by USP9X. Interaction with MAPKAP1 is not enhanced by RICTOR deubiquitination by USP9X. Interacts with CCDC28B. Interacts with NBN. Interacts with SIK3. Interacts with NCKAP1L. Interacts with kinases GSK3A and GSK3B; the interactions lead to phosphorylation of RICTOR at Thr-1695 which facilitates its FBXW7-mediated ubiquitination and subsequent degradation. Interacts with FBXW7; the interaction is enhanced by GSK3-mediated phosphorylation of Thr-1695 and results in RICTOR ubiquitination and degradation. Interacts with ARMH4 (via cytoplasmic tail); this interaction bridges ARMH4 to the mTORC2 complex and inhibits the mTORC2 kinase activity. Interacts with UBXN2A. Interacts with TSPAN8. (Microbial infection) Interacts with vaccinia virus protein F17; this interaction dysregulates MTOR. Post-translationally, phosphorylated by MTOR; when part of mTORC2. Phosphorylated at Thr-1135 by RPS6KB1 downstream of the mTORC1 complex: phosphorylation of RICTOR inhibits mTORC2 signaling by creating a binding site for 14-3-3 proteins. Phosphorylated at Thr-1695 by GSK3A and GSK3B which facilitates RICTOR ubiquitination and subsequent degradation. Phosphorylated at Ser-1235 by GSK3B in response to endoplasmic stress, inhibiting mTORC2 signaling. Ubiquitinated by the SCF(FBXW7) complex, leading to its degradation by the proteasome. Deubiquitinated by USP9X; deubiquitination stabilizes RICTOR and enhances its binding to MTOR, thus promoting mTORC2 complex assembly. In terms of processing, acetylated by EP300/p300 in response to glucose, leading to activate the mTORC2 complex. Acetylation by BLOC1S1/GCN5L1 in response to hypotoxic stress protects RICTOR against ubiquitination and subsequent degradation by the proteasome.

It is found in the cell membrane. It localises to the endoplasmic reticulum membrane. The protein localises to the lysosome membrane. In terms of biological role, component of the mechanistic target of rapamycin complex 2 (mTORC2), which transduces signals from growth factors to pathways involved in proliferation, cytoskeletal organization, lipogenesis and anabolic output. In response to growth factors, mTORC2 phosphorylates and activates AGC protein kinase family members, including AKT (AKT1, AKT2 and AKT3), PKC (PRKCA, PRKCB and PRKCE) and SGK1. In contrast to mTORC1, mTORC2 is nutrient-insensitive. Within the mTORC2 complex, RICTOR probably acts as a molecular adapter. RICTOR is responsible for the FKBP12-rapamycin-insensitivity of mTORC2. mTORC2 plays a critical role in AKT1 activation by mediating phosphorylation of different sites depending on the context, such as 'Thr-450', 'Ser-473', 'Ser-477' or 'Thr-479', facilitating the phosphorylation of the activation loop of AKT1 on 'Thr-308' by PDPK1/PDK1 which is a prerequisite for full activation. mTORC2 catalyzes the phosphorylation of SGK1 at 'Ser-422' and of PRKCA on 'Ser-657'. The mTORC2 complex also phosphorylates various proteins involved in insulin signaling, such as FBXW8 and IGF2BP1. mTORC2 acts upstream of Rho GTPases to regulate the actin cytoskeleton, probably by activating one or more Rho-type guanine nucleotide exchange factors. mTORC2 promotes the serum-induced formation of stress-fibers or F-actin. This chain is Rapamycin-insensitive companion of mTOR, found in Homo sapiens (Human).